Here is a 304-residue protein sequence, read N- to C-terminus: Acetylxylan esterase A (304 aa).

Positions 1–24 are cleaved as a signal peptide; it reads MLLSTHLLFVITTLVTSLLHPIDG. The active-site Charge relay system is the serine 148. Residue asparagine 190 is glycosylated (N-linked (GlcNAc...) asparagine).

The protein belongs to the carbohydrate esterase 1 (CE1) family. AxeA subfamily. Monomer.

It is found in the secreted. It catalyses the reaction Deacetylation of xylans and xylo-oligosaccharides.. It functions in the pathway glycan degradation; xylan degradation. Its activity is regulated as follows. Inactivated by di-isopropylfluorophosphate and phenylmethylsulfonylfluorid (PMSF), a specific inhibitor of serine esterases. In terms of biological role, acetylxylan esterase involved in the hydrolysis of xylan, a major structural heterogeneous polysaccharide found in plant biomass representing the second most abundant polysaccharide in the biosphere, after cellulose. Degrades acetylated xylans by cleaving acetyl side groups from the hetero-xylan backbone. This Aspergillus awamori (Black koji mold) protein is Acetylxylan esterase A (axeA).